The primary structure comprises 319 residues: Tryptophan--tRNA ligase (319 aa).

ATP-binding positions include 8–10 and 16–17; these read QPS and GN. The short motif at 9 to 17 is the 'HIGH' region element; it reads PSGDLHIGN. An L-tryptophan-binding site is contributed by Asp131. Residues 143 to 145, Val182, and 189 to 193 each bind ATP; these read GKD and KMSKS. The short motif at 189–193 is the 'KMSKS' region element; it reads KMSKS.

Belongs to the class-I aminoacyl-tRNA synthetase family. Homodimer.

It is found in the cytoplasm. It carries out the reaction tRNA(Trp) + L-tryptophan + ATP = L-tryptophyl-tRNA(Trp) + AMP + diphosphate + H(+). Catalyzes the attachment of tryptophan to tRNA(Trp). The sequence is that of Tryptophan--tRNA ligase from Campylobacter jejuni subsp. jejuni serotype O:2 (strain ATCC 700819 / NCTC 11168).